The following is a 153-amino-acid chain: UPF0235 protein C15orf40 (153 aa).

Residues 1-12 (MLRLRSGLRHLR) show a composition bias toward basic residues. The disordered stretch occupies residues 1–55 (MLRLRSGLRHLRATPNTRGSARLLCAEMPKKAGATTKGKSQSKEPERPLPPLGPV). Serine 116 carries the phosphoserine modification.

Belongs to the UPF0235 family.

This Homo sapiens (Human) protein is UPF0235 protein C15orf40 (C15orf40).